Consider the following 332-residue polypeptide: L-lactate dehydrogenase A chain (332 aa).

Residues 29–57 and R99 contribute to the NAD(+) site; that span reads GAVG…MEDK. Substrate is bound by residues R106, N138, and R169. Residue N138 participates in NAD(+) binding. Catalysis depends on H193, which acts as the Proton acceptor. Residue T248 participates in substrate binding.

Belongs to the LDH/MDH superfamily. LDH family. Homotetramer.

The protein localises to the cytoplasm. It catalyses the reaction (S)-lactate + NAD(+) = pyruvate + NADH + H(+). It participates in fermentation; pyruvate fermentation to lactate; (S)-lactate from pyruvate: step 1/1. Functionally, interconverts simultaneously and stereospecifically pyruvate and lactate with concomitant interconversion of NADH and NAD(+). The sequence is that of L-lactate dehydrogenase A chain (LDHA) from Sceloporus undulatus (Eastern fence lizard).